A 376-amino-acid chain; its full sequence is Cell adhesion molecule CEACAM18 (376 aa).

An N-terminal signal peptide occupies residues 1–30; the sequence is MDFSRPSFSPWRWLTLVASLLTCGICQASG. The Extracellular portion of the chain corresponds to 31 to 330; the sequence is QIFISPDSLL…PLPTVNRELY (300 aa). Residues N69, N95, and N110 are each glycosylated (N-linked (GlcNAc...) asparagine). Residues 229-314 enclose the Ig-like C2-type domain; that stretch reads PDYVSLWTQP…TQLTFYRDVT (86 aa). The cysteines at positions 257 and 298 are disulfide-linked. Residues 331–351 form a helical membrane-spanning segment; that stretch reads IPGPLVIFLILLTSLGGAFVC. Residues 352-376 lie on the Cytoplasmic side of the membrane; sequence RVLVYSLFQSCSRGKTCHKCPWQTN.

The protein belongs to the immunoglobulin superfamily. CEA family. Mostly expressed in the small and large intestine and at lower levels also in other organs.

It localises to the membrane. In Mus musculus (Mouse), this protein is Cell adhesion molecule CEACAM18.